The chain runs to 454 residues: F-box/WD-40 repeat-containing protein At3g52030 (454 aa).

Residues 20 to 66 form the F-box domain; the sequence is PTSIESLDADILCIIFSFLDLFDLVHCTVVCNSWNAVIKRLKLLQAS. WD repeat units lie at residues 85-116, 117-153, 170-214, 215-255, 258-296, 301-340, 343-383, and 422-454; these read DRPAEIDVEDFAMKHHKMALLRGRIEIERWEA, HSHRVSQCRMKKGLLLTGVGDKVMRLWSLKSYKCMEE, SKKL…SIFP, SRAG…CSQI, TQGGPITCLSLSDNQLFLSGSSLGRVTVSDPLMDQPVAT, ITAGGIQTICFNQGTNLAFIGTTGGYVSCWDLRKMDRLWE, VSPN…VLSR, and KVRPQISCIAMGMKKMVTAHNGKCISVWKFNLS.

The sequence is that of F-box/WD-40 repeat-containing protein At3g52030 from Arabidopsis thaliana (Mouse-ear cress).